We begin with the raw amino-acid sequence, 104 residues long: Nucleoid-associated protein OB0030 (104 aa).

A disordered region spans residues 1–23 (MKGNMNNMMKQMQKMQKKMMQAQ).

It belongs to the YbaB/EbfC family. In terms of assembly, homodimer.

Its subcellular location is the cytoplasm. It is found in the nucleoid. Its function is as follows. Binds to DNA and alters its conformation. May be involved in regulation of gene expression, nucleoid organization and DNA protection. This Oceanobacillus iheyensis (strain DSM 14371 / CIP 107618 / JCM 11309 / KCTC 3954 / HTE831) protein is Nucleoid-associated protein OB0030.